A 127-amino-acid chain; its full sequence is Protein HI_1253 (127 aa).

The next 4 helical transmembrane spans lie at 13–33, 61–81, 82–102, and 107–127; these read VIMLVHLHIFFAFLSLALLVI, LIVSGVVILYLFAFGIEWWLV, AKFALLILYIVFAAKFFSKKV, and SIFFWLACVSFIGAMLIAYLK.

The protein belongs to the SirB2 family.

The protein resides in the cell inner membrane. The chain is Protein HI_1253 from Haemophilus influenzae (strain ATCC 51907 / DSM 11121 / KW20 / Rd).